Reading from the N-terminus, the 203-residue chain is Inosine triphosphate pyrophosphatase (203 aa).

ITP is bound at residue threonine 13 to lysine 18. A Mg(2+)-binding site is contributed by glutamate 43. ITP contacts are provided by residues lysine 55, aspartate 71–threonine 72, lysine 88, phenylalanine 147–aspartate 150, lysine 170, and histidine 175–arginine 176.

The protein belongs to the HAM1 NTPase family. In terms of assembly, homodimer. Mg(2+) serves as cofactor. The cofactor is Mn(2+).

The protein resides in the cytoplasm. It carries out the reaction ITP + H2O = IMP + diphosphate + H(+). It catalyses the reaction dITP + H2O = dIMP + diphosphate + H(+). The enzyme catalyses XTP + H2O = XMP + diphosphate + H(+). The catalysed reaction is N(6)-hydroxy-dATP + H2O = N(6)-hydroxy-dAMP + diphosphate + H(+). Its function is as follows. Pyrophosphatase that hydrolyzes the non-canonical purine nucleotides inosine triphosphate (ITP), deoxyinosine triphosphate (dITP) as well as 2'-deoxy-N-6-hydroxylaminopurine triphosphate (dHAPTP) and xanthosine 5'-triphosphate (XTP) to their respective monophosphate derivatives. The enzyme does not distinguish between the deoxy- and ribose forms. Probably excludes non-canonical purines from RNA and DNA precursor pools, thus preventing their incorporation into RNA and DNA and avoiding chromosomal lesions. This chain is Inosine triphosphate pyrophosphatase (itpa), found in Danio rerio (Zebrafish).